The primary structure comprises 279 residues: Large ribosomal subunit protein uL2 (279 aa).

2 disordered regions span residues 1–59 and 224–279; these read MGIR…GGHK and VAMN…KNKR. Basic residues predominate over residues 50–59; that stretch reads TTRHKGGGHK. Positions 253 to 268 are enriched in basic and acidic residues; it reads REGRTRRPNKESDKLI. Residues 269 to 279 show a composition bias toward basic residues; it reads VRRRRTGKNKR.

The protein belongs to the universal ribosomal protein uL2 family. Part of the 50S ribosomal subunit. Forms a bridge to the 30S subunit in the 70S ribosome.

Its function is as follows. One of the primary rRNA binding proteins. Required for association of the 30S and 50S subunits to form the 70S ribosome, for tRNA binding and peptide bond formation. It has been suggested to have peptidyltransferase activity; this is somewhat controversial. Makes several contacts with the 16S rRNA in the 70S ribosome. The polypeptide is Large ribosomal subunit protein uL2 (Pseudarthrobacter chlorophenolicus (strain ATCC 700700 / DSM 12829 / CIP 107037 / JCM 12360 / KCTC 9906 / NCIMB 13794 / A6) (Arthrobacter chlorophenolicus)).